The primary structure comprises 189 residues: MTDKTEKVAVDPETVFKRPRECDSPSYQKRQRMALLARKQGAGDSLIAGSAMSKEKKLMTGHAIPPSQLDSQIDDFTGFSKDGMMQKPGSNAPVGGNVTSSFSGDDLECRETASSPKSQREINADIKRKLVKELRCVGQKYEKIFEMLEGVQGPTAVRKRFFESIIKEAARCMRRDFVKHLKKKLKRMI.

The segment covering 1 to 23 (MTDKTEKVAVDPETVFKRPRECD) has biased composition (basic and acidic residues). Disordered stretches follow at residues 1–27 (MTDK…SPSY) and 82–118 (DGMM…SPKS).

It belongs to the CT45 family. As to expression, testis specific. Expressed in cancer cell lines.

The protein localises to the nucleus. The sequence is that of Cancer/testis antigen family 45 member A5 from Homo sapiens (Human).